Reading from the N-terminus, the 106-residue chain is Thioredoxin-like protein YusE (106 aa).

A Thioredoxin domain is found at Met1–Ser101. Cys26 and Cys29 are joined by a disulfide.

This Bacillus subtilis (strain 168) protein is Thioredoxin-like protein YusE (yusE).